The chain runs to 153 residues: Actin-related protein 2/3 complex subunit 5-like protein (153 aa).

At S64 the chain carries Phosphoserine.

The protein belongs to the ARPC5 family. As to quaternary structure, may be a component of the Arp2/3 complex in which it may replace ARPC5.

It localises to the cytoplasm. It is found in the cytoskeleton. Its function is as follows. May function as component of the Arp2/3 complex which is involved in regulation of actin polymerization and together with an activating nucleation-promoting factor (NPF) mediates the formation of branched actin networks. The protein is Actin-related protein 2/3 complex subunit 5-like protein (Arpc5l) of Rattus norvegicus (Rat).